Here is a 643-residue protein sequence, read N- to C-terminus: MHGLLLAGLLALPLNVLAHPTESHSSGISRRAIDITSYRLPQISKYTKSDAVPKQDDESFTTSSTGDDNVSSGDYVTTATDWLKKTLPKATYRLVNDHYIGDSGIGHVHFRQTAHGIDIDNTDFNVNIGRDGKVFSFGNSFYDGEIPKANPMVKRDFSDPVNALQGAIQTLNLPVTAKPENVKAKPVEGKENFKFEGTSGAFSDPKAQLVYLQKDGGLVLSWKVETDIGDNWLLTYVDANKNDKVHSVVDYVSAAEYKVYPWGINDPTEGNRTSIHLPWFKTLSTDWHIDGKGWYSTTRGNNAIAQENPTGGPEYENNYRPKSPLFIFKYPYSEAMTPPSSYRDASITQLFYTTNVYHDVLYILGFNEKAGNFQVNNWNKGGVGGDFAILNSQDGSGVNNANFATPPDGQPGRMRMYTWNASTPERDGCFEAGIVIHEYTHGVSNRLTGGPANSRCLAALESGGMGEGWSDFFATAIRLKAGDTRATDYTMGEWASNRPNGIRKYRYSTNLTTNPHMYVDADGLTSVHAIGTIWASMLYELLWNLIDKHGKGNVTKVRPVLKNGVPTDGRHLAMKLVLDGMALQPCLPNFVQARDAILDADKVLTQGSNKCEIWKAFAKRGLGVGAVFNPSKRTGSNELPAGC.

A signal peptide spans 1 to 18 (MHGLLLAGLLALPLNVLA). The propeptide occupies 19–254 (HPTESHSSGI…VHSVVDYVSA (236 aa)). Positions 47–57 (TKSDAVPKQDD) are enriched in basic and acidic residues. A disordered region spans residues 47–71 (TKSDAVPKQDDESFTTSSTGDDNVS). Polar residues predominate over residues 60-71 (FTTSSTGDDNVS). 2 N-linked (GlcNAc...) asparagine glycosylation sites follow: Asn271 and Asn420. Zn(2+) is bound at residue His437. The active site involves Glu438. His441 is a binding site for Zn(2+). N-linked (GlcNAc...) asparagine glycosylation is found at Asn510 and Asn553.

The protein belongs to the peptidase M36 family. It depends on Zn(2+) as a cofactor.

It is found in the secreted. Functionally, secreted metalloproteinase probably acting as a virulence factor. The protein is Extracellular metalloproteinase 4 (MEP4) of Arthroderma benhamiae (Trichophyton mentagrophytes).